The primary structure comprises 203 residues: Sec-independent protein translocase protein TatB (203 aa).

Residues 1 to 21 (MFDIGWTELLVIAVVLIVVVG) traverse the membrane as a helical segment. The interval 179–203 (KPKRTTAVRKPATLKKPAQTKKDEA) is disordered.

The protein belongs to the TatB family. The Tat system comprises two distinct complexes: a TatABC complex, containing multiple copies of TatA, TatB and TatC subunits, and a separate TatA complex, containing only TatA subunits. Substrates initially bind to the TatABC complex, which probably triggers association of the separate TatA complex to form the active translocon.

Its subcellular location is the cell inner membrane. Functionally, part of the twin-arginine translocation (Tat) system that transports large folded proteins containing a characteristic twin-arginine motif in their signal peptide across membranes. Together with TatC, TatB is part of a receptor directly interacting with Tat signal peptides. TatB may form an oligomeric binding site that transiently accommodates folded Tat precursor proteins before their translocation. The polypeptide is Sec-independent protein translocase protein TatB (Rhizobium johnstonii (strain DSM 114642 / LMG 32736 / 3841) (Rhizobium leguminosarum bv. viciae)).